The chain runs to 352 residues: Probable dual-specificity RNA methyltransferase RlmN (352 aa).

Catalysis depends on Glu99, which acts as the Proton acceptor. The region spanning 105-339 (TKSRTTACVS…VTVRRSRGKD (235 aa)) is the Radical SAM core domain. Cys112 and Cys344 form a disulfide bridge. [4Fe-4S] cluster contacts are provided by Cys119, Cys123, and Cys126. S-adenosyl-L-methionine is bound by residues 170–171 (GE), Ser202, 225–227 (SLH), and Asn301. Catalysis depends on Cys344, which acts as the S-methylcysteine intermediate.

It belongs to the radical SAM superfamily. RlmN family. [4Fe-4S] cluster serves as cofactor.

Its subcellular location is the cytoplasm. It carries out the reaction adenosine(2503) in 23S rRNA + 2 reduced [2Fe-2S]-[ferredoxin] + 2 S-adenosyl-L-methionine = 2-methyladenosine(2503) in 23S rRNA + 5'-deoxyadenosine + L-methionine + 2 oxidized [2Fe-2S]-[ferredoxin] + S-adenosyl-L-homocysteine. The catalysed reaction is adenosine(37) in tRNA + 2 reduced [2Fe-2S]-[ferredoxin] + 2 S-adenosyl-L-methionine = 2-methyladenosine(37) in tRNA + 5'-deoxyadenosine + L-methionine + 2 oxidized [2Fe-2S]-[ferredoxin] + S-adenosyl-L-homocysteine. Its function is as follows. Specifically methylates position 2 of adenine 2503 in 23S rRNA and position 2 of adenine 37 in tRNAs. The polypeptide is Probable dual-specificity RNA methyltransferase RlmN (Christiangramia forsetii (strain DSM 17595 / CGMCC 1.15422 / KT0803) (Gramella forsetii)).